A 112-amino-acid polypeptide reads, in one-letter code: Large ribosomal subunit protein eL30x (112 aa).

It belongs to the eukaryotic ribosomal protein eL30 family.

This chain is Large ribosomal subunit protein eL30x (RPL30C), found in Arabidopsis thaliana (Mouse-ear cress).